Here is a 181-residue protein sequence, read N- to C-terminus: NAD(P)H-quinone oxidoreductase subunit 6, chloroplastic (181 aa).

Helical transmembrane passes span 13–33 (PILYFLDVGILLGGLGVVFFG), 35–55 (IIYSALFLGVVFVCVALLYLL), 64–84 (AQILIYVGAINVLIVFAIMLI), 98–118 (FGDILSGFSVFGLFSFLIIMI), and 152–172 (LLPFELLSILLLVALVGAITI).

This sequence belongs to the complex I subunit 6 family. As to quaternary structure, NDH is composed of at least 16 different subunits, 5 of which are encoded in the nucleus.

Its subcellular location is the plastid. It localises to the chloroplast thylakoid membrane. The enzyme catalyses a plastoquinone + NADH + (n+1) H(+)(in) = a plastoquinol + NAD(+) + n H(+)(out). It carries out the reaction a plastoquinone + NADPH + (n+1) H(+)(in) = a plastoquinol + NADP(+) + n H(+)(out). In terms of biological role, NDH shuttles electrons from NAD(P)H:plastoquinone, via FMN and iron-sulfur (Fe-S) centers, to quinones in the photosynthetic chain and possibly in a chloroplast respiratory chain. The immediate electron acceptor for the enzyme in this species is believed to be plastoquinone. Couples the redox reaction to proton translocation, and thus conserves the redox energy in a proton gradient. This is NAD(P)H-quinone oxidoreductase subunit 6, chloroplastic (ndhG) from Staurastrum punctulatum (Green alga).